The following is a 296-amino-acid chain: MEETTPPLQAGSKPHLEKLTLGVTRILESSPGVTEVSIIEKLPAERHVISSWEQKNNCVMPEDVRNFYLMTNGFHMTWSVKLDEHIIPLGSMVINGISKLTQLIQSSVYSLPNAPTLADLEDDTQEGNEDHQLEKPHFDCRSAIFELDSCNGNGKVCLVYKNGKPGLAHDTEIWFLDRALYWHFLTDTFIAYYRLLITHLGLPQWQYAFTSYGISPQAKQWFSMYKPITYNTSLLTEESDNFANKLDPSKVFKSKNKILIPKKKGPVPPASGQKGPGPLPPPTSKPTTGSGNPVRK.

Residues 254 to 265 (SKNKILIPKKKG) are compositionally biased toward basic residues. A disordered region spans residues 254–296 (SKNKILIPKKKGPVPPASGQKGPGPLPPPTSKPTTGSGNPVRK). Residues 285-296 (KPTTGSGNPVRK) show a composition bias toward low complexity.

As to quaternary structure, part of the neuronal tubulin polyglutamylase complex which contains TPGS1, TPGS2, TTLL1, LRRC49 and NICN1. Interacts with CSTPP1 and LRRC49.

The protein resides in the cytoplasm. It is found in the cytoskeleton. The protein localises to the microtubule organizing center. It localises to the centrosome. Its subcellular location is the centriolar satellite. Its function is as follows. Subunit of the tubulin polyglutamylase complex (TPGC). The complex mediates cilia and flagella polyglutamylation which is essential for their biogenesis and motility. In Mus musculus (Mouse), this protein is Tubulin polyglutamylase complex subunit 2 (Tpgs2).